Reading from the N-terminus, the 346-residue chain is Very-long-chain 3-oxoacyl-CoA reductase (346 aa).

A helical membrane pass occupies residues 23–43 (AAWIVFGLGISKMVFLTLNFS). Residues V69, D123, N150, Y222, K226, V255, and S257 each coordinate NADP(+). The active-site Proton donor is Y222. K226 functions as the Lowers pKa of active site Tyr in the catalytic mechanism.

It belongs to the short-chain dehydrogenases/reductases (SDR) family.

The protein localises to the endoplasmic reticulum membrane. The catalysed reaction is a very-long-chain (3R)-3-hydroxyacyl-CoA + NADP(+) = a very-long-chain 3-oxoacyl-CoA + NADPH + H(+). Its pathway is lipid metabolism; fatty acid biosynthesis. Component of the microsomal membrane bound fatty acid elongation system, which produces the 26-carbon very long-chain fatty acids (VLCFA) from palmitate. Catalyzes the reduction of the 3-ketoacyl-CoA intermediate that is formed in each cycle of fatty acid elongation. VLCFAs serve as precursors for ceramide and sphingolipids. This Kluyveromyces lactis (strain ATCC 8585 / CBS 2359 / DSM 70799 / NBRC 1267 / NRRL Y-1140 / WM37) (Yeast) protein is Very-long-chain 3-oxoacyl-CoA reductase.